The following is a 346-amino-acid chain: Pheromone receptor 2 (346 aa).

The next 7 membrane-spanning stretches (helical) occupy residues 8 to 28, 34 to 54, 71 to 94, 115 to 135, 160 to 180, 219 to 239, and 270 to 290; these read VSFG…CLIH, IGVL…GINA, LSAI…LQRL, LIDF…FFIV, FIYH…AVLV, VLVS…GGLL, and LSIL…FFGL.

This sequence belongs to the G-protein coupled receptor 4 family.

It localises to the membrane. Its function is as follows. Receptor for the A1 pheromone, a prenylated mating factor. The chain is Pheromone receptor 2 (PRA2) from Mycosarcoma maydis (Corn smut fungus).